The sequence spans 37 residues: Delta/kappa-conotoxin Mo3964 (37 aa).

Disulfide bonds link C4–C12, C11–C27, and C21–C34.

In terms of tissue distribution, expressed by the venom duct.

The protein resides in the secreted. This toxin reduces the outward currents that are due to the opening of voltage-gated potassium channels in DRG neurons. In addition, leftward shift in the presence of this toxin is observed in averaged normalized conductance-voltage plot of outward sodium currents (Nav1.2/SCN2A). This is Delta/kappa-conotoxin Mo3964 from Conus monile (Necklace cone).